A 275-amino-acid polypeptide reads, in one-letter code: Interleukin-2 receptor subunit alpha (275 aa).

Positions 1–21 (MEPSLLMWRFFVFIVVPGCVT) are cleaved as a signal peptide. 2 Sushi domains span residues 22–81 (EACH…FCNS) and 121–186 (GHCE…KCIS). Over 22–243 (EACHDDPPSL…DTFIFTTEYQ (222 aa)) the chain is Extracellular. 3 cysteine pairs are disulfide-bonded: Cys-24–Cys-64, Cys-49–Cys-77, and Cys-51–Cys-79. N-linked (GlcNAc...) asparagine glycosylation occurs at Asn-80. The disordered stretch occupies residues 86–130 (KNPVKPVTPGSEEQRERKPTDAQSQTQPPEQADLPGHCEEPPPWE). Basic and acidic residues predominate over residues 121 to 130 (GHCEEPPPWE). Cystine bridges form between Cys-123–Cys-168 and Cys-152–Cys-184. Residues 188 to 213 (GANSQAPDEAEPPESTEAPPGSGTFL) form a disordered region. The chain crosses the membrane as a helical span at residues 244–262 (IAVAGCILLLSSILLLSCL). The Cytoplasmic segment spans residues 263 to 275 (TWQRRWKKNRRTI).

In terms of assembly, non-covalent dimer of an alpha and a beta subunit. IL2R exists in 3 different forms: a high affinity dimer, an intermediate affinity monomer (beta subunit), and a low affinity monomer (alpha subunit). The high and intermediate affinity forms also associate with a gamma subunit.

It is found in the membrane. Its function is as follows. Receptor for interleukin-2. The receptor is involved in the regulation of immune tolerance by controlling regulatory T cells (TREGs) activity. TREGs suppress the activation and expansion of autoreactive T-cells. The protein is Interleukin-2 receptor subunit alpha (IL2RA) of Ovis aries (Sheep).